A 214-amino-acid polypeptide reads, in one-letter code: Ribonuclease HII (214 aa).

The RNase H type-2 domain maps to 26 to 214 (EIVCGVDEAG…PVREAFDLIR (189 aa)). Positions 32, 33, and 124 each coordinate a divalent metal cation.

The protein belongs to the RNase HII family. Mn(2+) serves as cofactor. It depends on Mg(2+) as a cofactor.

The protein resides in the cytoplasm. It carries out the reaction Endonucleolytic cleavage to 5'-phosphomonoester.. Endonuclease that specifically degrades the RNA of RNA-DNA hybrids. This Burkholderia pseudomallei (strain 1710b) protein is Ribonuclease HII.